We begin with the raw amino-acid sequence, 119 residues long: Protein TusC (119 aa).

Belongs to the DsrF/TusC family. Heterohexamer, formed by a dimer of trimers. The hexameric TusBCD complex contains 2 copies each of TusB, TusC and TusD. The TusBCD complex interacts with TusE.

It localises to the cytoplasm. In terms of biological role, part of a sulfur-relay system required for 2-thiolation of 5-methylaminomethyl-2-thiouridine (mnm(5)s(2)U) at tRNA wobble positions. In Sodalis glossinidius (strain morsitans), this protein is Protein TusC.